The chain runs to 450 residues: Membrane-bound lytic murein transglycosylase F 2 (450 aa).

The N-terminal stretch at 1 to 20 (MRTWIAILAVVLVLLLNACT) is a signal peptide. The non-LT domain stretch occupies residues 21–261 (DGPEDGPRLE…AMENRYYTYV (241 aa)). The interval 262–450 (GEFDFVDLRA…YRDVIRQAFE (189 aa)) is LT domain. Residue glutamate 308 is part of the active site.

It in the N-terminal section; belongs to the bacterial solute-binding protein 3 family. The protein in the C-terminal section; belongs to the transglycosylase Slt family.

Its subcellular location is the cell outer membrane. The catalysed reaction is Exolytic cleavage of the (1-&gt;4)-beta-glycosidic linkage between N-acetylmuramic acid (MurNAc) and N-acetylglucosamine (GlcNAc) residues in peptidoglycan, from either the reducing or the non-reducing ends of the peptidoglycan chains, with concomitant formation of a 1,6-anhydrobond in the MurNAc residue.. Its function is as follows. Murein-degrading enzyme that degrades murein glycan strands and insoluble, high-molecular weight murein sacculi, with the concomitant formation of a 1,6-anhydromuramoyl product. Lytic transglycosylases (LTs) play an integral role in the metabolism of the peptidoglycan (PG) sacculus. Their lytic action creates space within the PG sacculus to allow for its expansion as well as for the insertion of various structures such as secretion systems and flagella. The polypeptide is Membrane-bound lytic murein transglycosylase F 2 (Alkalilimnicola ehrlichii (strain ATCC BAA-1101 / DSM 17681 / MLHE-1)).